The following is a 76-amino-acid chain: Alpha-amylase inhibitor Z-2685 (76 aa).

Disulfide bonds link Cys-9–Cys-25 and Cys-43–Cys-70.

Inhibits mammalian alpha-amylases specifically but has no action on plant and microbial alpha-amylases. This is Alpha-amylase inhibitor Z-2685 from Streptomyces rochei (Streptomyces parvullus).